The primary structure comprises 162 residues: Phosphopantetheine adenylyltransferase (162 aa).

Residue T14 coordinates substrate. Residues T14–F15 and H22 each bind ATP. 3 residues coordinate substrate: K46, L78, and R92. Residues G93–R95, E103, and H128–S134 contribute to the ATP site.

It belongs to the bacterial CoaD family. Homohexamer. Mg(2+) is required as a cofactor.

It is found in the cytoplasm. It carries out the reaction (R)-4'-phosphopantetheine + ATP + H(+) = 3'-dephospho-CoA + diphosphate. The protein operates within cofactor biosynthesis; coenzyme A biosynthesis; CoA from (R)-pantothenate: step 4/5. Its function is as follows. Reversibly transfers an adenylyl group from ATP to 4'-phosphopantetheine, yielding dephospho-CoA (dPCoA) and pyrophosphate. The sequence is that of Phosphopantetheine adenylyltransferase from Xylella fastidiosa (strain M23).